A 514-amino-acid polypeptide reads, in one-letter code: 2,3-bisphosphoglycerate-independent phosphoglycerate mutase (514 aa).

Residues Asp15 and Ser65 each contribute to the Mn(2+) site. Catalysis depends on Ser65, which acts as the Phosphoserine intermediate. Substrate is bound by residues His126, 156–157, Arg188, Arg194, 261–264, and Lys335; these read RD and RADR. Positions 403, 407, 444, 445, and 462 each coordinate Mn(2+).

The protein belongs to the BPG-independent phosphoglycerate mutase family. As to quaternary structure, monomer. Mn(2+) serves as cofactor.

It catalyses the reaction (2R)-2-phosphoglycerate = (2R)-3-phosphoglycerate. It participates in carbohydrate degradation; glycolysis; pyruvate from D-glyceraldehyde 3-phosphate: step 3/5. Functionally, catalyzes the interconversion of 2-phosphoglycerate and 3-phosphoglycerate. In Syntrophotalea carbinolica (strain DSM 2380 / NBRC 103641 / GraBd1) (Pelobacter carbinolicus), this protein is 2,3-bisphosphoglycerate-independent phosphoglycerate mutase.